A 154-amino-acid chain; its full sequence is Superoxide dismutase [Cu-Zn] (154 aa).

Cu cation-binding residues include His-47, His-49, and His-64. Cys-58 and Cys-147 are joined by a disulfide. Positions 64, 72, 81, and 84 each coordinate Zn(2+). Cu cation is bound at residue His-121. Arg-144 serves as a coordination point for substrate.

This sequence belongs to the Cu-Zn superoxide dismutase family. In terms of assembly, homodimer. It depends on Cu cation as a cofactor. Zn(2+) is required as a cofactor.

It localises to the cytoplasm. It carries out the reaction 2 superoxide + 2 H(+) = H2O2 + O2. In terms of biological role, destroys radicals which are normally produced within the cells and which are toxic to biological systems. The protein is Superoxide dismutase [Cu-Zn] (SOD1) of Candida albicans (Yeast).